The sequence spans 133 residues: Small ribosomal subunit protein uS8 (133 aa).

It belongs to the universal ribosomal protein uS8 family. Part of the 30S ribosomal subunit. Contacts proteins S5 and S12.

In terms of biological role, one of the primary rRNA binding proteins, it binds directly to 16S rRNA central domain where it helps coordinate assembly of the platform of the 30S subunit. The polypeptide is Small ribosomal subunit protein uS8 (Deinococcus deserti (strain DSM 17065 / CIP 109153 / LMG 22923 / VCD115)).